A 147-amino-acid polypeptide reads, in one-letter code: Hemoglobin subunit beta (147 aa).

Position 2 is an N-acetylvaline (V2). The 145-residue stretch at 3–147 (HLTGDEKAAV…VANALAHKYH (145 aa)) folds into the Globin domain. Position 13 is a phosphothreonine (T13). S45 bears the Phosphoserine mark. K60 is modified (N6-acetyllysine). Position 64 (H64) interacts with heme b. Position 83 is an N6-acetyllysine (K83). H93 lines the heme b pocket. C94 carries the S-nitrosocysteine modification. K145 bears the N6-acetyllysine mark.

It belongs to the globin family. As to quaternary structure, heterotetramer of two alpha chains and two beta chains. Red blood cells.

Its function is as follows. Involved in oxygen transport from the lung to the various peripheral tissues. The protein is Hemoglobin subunit beta (HBB) of Saimiri sciureus (Common squirrel monkey).